Reading from the N-terminus, the 369-residue chain is Phospho-N-acetylmuramoyl-pentapeptide-transferase (369 aa).

The next 10 membrane-spanning stretches (helical) occupy residues 30–50 (AAAI…IGYL), 73–93 (LPTM…LLWA), 99–119 (YVWL…IDDY), 140–160 (VSLG…SVLL), 171–191 (LMID…TAVS), 202–222 (GLAA…AYLT), 239–259 (GGEV…FLWF), 266–286 (IFMG…IALL), 291–311 (LLLP…SLQV), and 346–366 (KIVI…LMTL).

The protein belongs to the glycosyltransferase 4 family. MraY subfamily. The cofactor is Mg(2+).

It is found in the cell inner membrane. It carries out the reaction UDP-N-acetyl-alpha-D-muramoyl-L-alanyl-gamma-D-glutamyl-meso-2,6-diaminopimeloyl-D-alanyl-D-alanine + di-trans,octa-cis-undecaprenyl phosphate = di-trans,octa-cis-undecaprenyl diphospho-N-acetyl-alpha-D-muramoyl-L-alanyl-D-glutamyl-meso-2,6-diaminopimeloyl-D-alanyl-D-alanine + UMP. It participates in cell wall biogenesis; peptidoglycan biosynthesis. Its function is as follows. Catalyzes the initial step of the lipid cycle reactions in the biosynthesis of the cell wall peptidoglycan: transfers peptidoglycan precursor phospho-MurNAc-pentapeptide from UDP-MurNAc-pentapeptide onto the lipid carrier undecaprenyl phosphate, yielding undecaprenyl-pyrophosphoryl-MurNAc-pentapeptide, known as lipid I. This is Phospho-N-acetylmuramoyl-pentapeptide-transferase from Chlorobium phaeobacteroides (strain BS1).